A 509-amino-acid polypeptide reads, in one-letter code: Heat shock 70 kDa protein 14-A (509 aa).

The protein belongs to the heat shock protein 70 family. Component of ribosome-associated complex (RAC).

It is found in the cytoplasm. The protein resides in the cytosol. Component of the ribosome-associated complex (RAC), a complex involved in folding or maintaining nascent polypeptides in a folding-competent state. The chain is Heat shock 70 kDa protein 14-A (hspa14-a) from Xenopus laevis (African clawed frog).